A 326-amino-acid polypeptide reads, in one-letter code: Beta-ketoacyl-[acyl-carrier-protein] synthase III (326 aa).

Active-site residues include cysteine 112 and histidine 251. Positions 252-256 (QANSR) are ACP-binding. Residue asparagine 281 is part of the active site.

The protein belongs to the thiolase-like superfamily. FabH family. In terms of assembly, homodimer.

The protein resides in the cytoplasm. The enzyme catalyses malonyl-[ACP] + acetyl-CoA + H(+) = 3-oxobutanoyl-[ACP] + CO2 + CoA. It functions in the pathway lipid metabolism; fatty acid biosynthesis. Catalyzes the condensation reaction of fatty acid synthesis by the addition to an acyl acceptor of two carbons from malonyl-ACP. Catalyzes the first condensation reaction which initiates fatty acid synthesis and may therefore play a role in governing the total rate of fatty acid production. Possesses both acetoacetyl-ACP synthase and acetyl transacylase activities. Its substrate specificity determines the biosynthesis of branched-chain and/or straight-chain of fatty acids. This is Beta-ketoacyl-[acyl-carrier-protein] synthase III from Clostridium botulinum (strain Langeland / NCTC 10281 / Type F).